A 307-amino-acid polypeptide reads, in one-letter code: Methionyl-tRNA formyltransferase (307 aa).

Position 109 to 112 (109 to 112) interacts with (6S)-5,6,7,8-tetrahydrofolate; it reads SMLP.

It belongs to the Fmt family.

The enzyme catalyses L-methionyl-tRNA(fMet) + (6R)-10-formyltetrahydrofolate = N-formyl-L-methionyl-tRNA(fMet) + (6S)-5,6,7,8-tetrahydrofolate + H(+). In terms of biological role, attaches a formyl group to the free amino group of methionyl-tRNA(fMet). The formyl group appears to play a dual role in the initiator identity of N-formylmethionyl-tRNA by promoting its recognition by IF2 and preventing the misappropriation of this tRNA by the elongation apparatus. The polypeptide is Methionyl-tRNA formyltransferase (Orientia tsutsugamushi (strain Boryong) (Rickettsia tsutsugamushi)).